The sequence spans 120 residues: Ribonuclease P protein component (120 aa).

It belongs to the RnpA family. As to quaternary structure, consists of a catalytic RNA component (M1 or rnpB) and a protein subunit.

It carries out the reaction Endonucleolytic cleavage of RNA, removing 5'-extranucleotides from tRNA precursor.. Functionally, RNaseP catalyzes the removal of the 5'-leader sequence from pre-tRNA to produce the mature 5'-terminus. It can also cleave other RNA substrates such as 4.5S RNA. The protein component plays an auxiliary but essential role in vivo by binding to the 5'-leader sequence and broadening the substrate specificity of the ribozyme. In Dehalococcoides mccartyi (strain CBDB1), this protein is Ribonuclease P protein component.